Reading from the N-terminus, the 164-residue chain is Phosphopantetheine adenylyltransferase (164 aa).

Ser-9 contacts substrate. ATP is bound by residues 9–10 (SF) and His-17. Residues Lys-41, Thr-74, and Arg-88 each coordinate substrate. ATP is bound by residues 89-91 (GVR), Glu-99, and 124-130 (NSFVASS).

This sequence belongs to the bacterial CoaD family. Homohexamer. The cofactor is Mg(2+).

The protein resides in the cytoplasm. The enzyme catalyses (R)-4'-phosphopantetheine + ATP + H(+) = 3'-dephospho-CoA + diphosphate. It functions in the pathway cofactor biosynthesis; coenzyme A biosynthesis; CoA from (R)-pantothenate: step 4/5. Reversibly transfers an adenylyl group from ATP to 4'-phosphopantetheine, yielding dephospho-CoA (dPCoA) and pyrophosphate. The sequence is that of Phosphopantetheine adenylyltransferase from Lactobacillus helveticus (strain DPC 4571).